We begin with the raw amino-acid sequence, 612 residues long: Sulfite reductase [NADPH] hemoprotein beta-component (612 aa).

The disordered stretch occupies residues 1-26; that stretch reads MDDHKPIETPDGPAVDTPGIGARRYE. Residues C469, C475, C514, and C518 each contribute to the [4Fe-4S] cluster site. Residue C518 coordinates siroheme.

Belongs to the nitrite and sulfite reductase 4Fe-4S domain family. Alpha(8)-beta(8). The alpha component is a flavoprotein, the beta component is a hemoprotein. Siroheme serves as cofactor. [4Fe-4S] cluster is required as a cofactor.

It carries out the reaction hydrogen sulfide + 3 NADP(+) + 3 H2O = sulfite + 3 NADPH + 4 H(+). It participates in sulfur metabolism; hydrogen sulfide biosynthesis; hydrogen sulfide from sulfite (NADPH route): step 1/1. Functionally, component of the sulfite reductase complex that catalyzes the 6-electron reduction of sulfite to sulfide. This is one of several activities required for the biosynthesis of L-cysteine from sulfate. This Methylorubrum extorquens (strain PA1) (Methylobacterium extorquens) protein is Sulfite reductase [NADPH] hemoprotein beta-component.